The chain runs to 265 residues: Orotidine 5'-phosphate decarboxylase (265 aa).

Residues aspartate 37, 59–61 (KTH), 91–100 (DRKFADIGNT), tyrosine 217, and arginine 235 each bind substrate. The active-site Proton donor is the lysine 93.

The protein belongs to the OMP decarboxylase family.

The catalysed reaction is orotidine 5'-phosphate + H(+) = UMP + CO2. It participates in pyrimidine metabolism; UMP biosynthesis via de novo pathway; UMP from orotate: step 2/2. The protein is Orotidine 5'-phosphate decarboxylase (URA3) of Diutina rugosa (Yeast).